The primary structure comprises 528 residues: MGQEVSSVNNTKNEHHKTNKKSLKGGNERHEMKESSVGISKKIVENSFNNSKLRPGMFIQNSNVVFNEQYKGIKILGKGSFGEVILSRDKHTGHEYAIKVISKKHVKRKTDKESLLREVELLKMLDHINIMKLYEFFEDNNYYYLVSDVYTGGELFDEIISRKRFYEIDAARIIKQILSGITYMHKNNVVHRDLKPENILLETKNKEDMIIKIIDFGLSTHFEYSKKMKDKIGTAYYIAPDVLHGTYDEKCDIWSCGVILYILLSGCPPFNGSNEYDILKKVEAGKYTFDLPQFKKISDKAKDLIKKMLMYTSAVRISARDALEHEWIKMMTSKDNLNIDIPSLELSIANIRQFQSTQKLAQAALLYMGSKLTTIDETKELTKIFKKMDKNGDGQLDRNELIIGYKELLKLKGEDTSDLDNAAIEYEVDQILNSIDLDQNGYIEYSEFLTVSIDRKLLLSTERLEKAFKLFDKDGSGKISANELAQLFGLSDVSSECWKTVLKEVDQNNDGEIDFKEFRDMLVKLCNY.

Residues 1–36 (MGQEVSSVNNTKNEHHKTNKKSLKGGNERHEMKESS) are disordered. Glycine 2 carries N-myristoyl glycine lipidation. The segment covering 14–23 (EHHKTNKKSL) has biased composition (basic residues). A Protein kinase domain is found at 71 to 329 (KGIKILGKGS…RDALEHEWIK (259 aa)). ATP is bound by residues 76 to 84 (LGKGSFGEV) and lysine 99. Aspartate 193 serves as the catalytic Proton acceptor. Positions 350-358 (NIRQFQSTQ) match the J domain autoinhibitory motif motif. Positions 350–386 (NIRQFQSTQKLAQAALLYMGSKLTTIDETKELTKIFK) are j domain. The short motif at 359–368 (KLAQAALLYM) is the J domain EF-hand interaction motif element. 4 EF-hand domains span residues 376 to 411 (DETK…LLKL), 427 to 458 (EVDQ…RKLL), 459 to 494 (LSTE…SDVS), and 496 to 528 (ECWK…LCNY). Residues aspartate 389, asparagine 391, aspartate 393, glutamine 395, glutamate 400, aspartate 436, aspartate 438, asparagine 440, tyrosine 442, glutamate 447, aspartate 472, aspartate 474, serine 476, lysine 478, glutamate 483, aspartate 506, asparagine 508, aspartate 510, glutamate 512, and glutamate 517 each contribute to the Ca(2+) site.

It belongs to the protein kinase superfamily. Ser/Thr protein kinase family. CDPK subfamily. In terms of assembly, may interact with the pre-replication MCM complex prior male gametogenesis activation. Requires Mg(2+) as cofactor. Myristoylated; myristoylation may target it to different subcellular compartments. During male gametogenesis, myristoylation is required to initiate DNA replication but not for mitotic spindle assembly or axoneme activation. Post-translationally, not palmitoylated. In terms of processing, may be autophosphorylated on Thr-234 in vitro.

The protein localises to the cytoplasm. It is found in the cell membrane. The catalysed reaction is L-seryl-[protein] + ATP = O-phospho-L-seryl-[protein] + ADP + H(+). The enzyme catalyses L-threonyl-[protein] + ATP = O-phospho-L-threonyl-[protein] + ADP + H(+). Activated by calcium. Upon calcium binding to the EF-hand domains, the C-terminus of the junction domain (J domain) undergoes a conformational change which results in the dissociation of the pseudo-substrate inhibitory motif from the catalytic domain. This, in turn, may facilitate the autophosphorylation of the activation loop at Thr-234, which leads to the kinase activation. Intracellular calcium increase is triggered by xanthurenic acid (XA), a small mosquito molecule that induces the differentiation of specialized transmission stages, the gametocytes, into male and female gametes. Activated by a decrease in temperature (20 degrees Celsius) and an increase in pH (7.6) occurring when the parasite is ingested by in the mosquito. Functionally, calcium-dependent protein kinase which acts as a sensor and effector of intracellular Ca(2+) levels probably in part downstream of cGMP-activated PKG kinase. Plays a central role in the host erythrocytes and hepatocytes infection cycles, sexual reproduction and mosquito transmission of the parasite. During the liver stage, involved in sporozoite motility and thus in sporozoite invasion of host hepatocytes, probably together with CDPK1 and CDPK5. Involved in merosome egress from host hepatocytes, probably together with CDPK5. During the asexual blood stage, involved in merozoite invasion of host erythrocytes and motility by stabilizing the inner membrane complex, a structure below the plasma membrane which acts as an anchor for the glidosome, an acto-myosin motor. Required for cell cycle progression in the male gametocyte. During male gametogenesis in the mosquito gut, required to initiate the first round of DNA replication, probably by facilitating the assembly of the pre-replicative MCM complex, to assemble the first mitotic spindle and, at the end of gametogenesis, to initiate axoneme motility, cytokinesis and subsequent exflagellation. For each of these steps, may phosphorylate SOC1, SOC2 and SOC3, respectively. Together with CDPK1, regulates ookinete gliding in the mosquito host midgut. The chain is Calcium-dependent protein kinase 4 from Plasmodium falciparum (isolate 3D7).